We begin with the raw amino-acid sequence, 203 residues long: ATP phosphoribosyltransferase (203 aa).

The protein belongs to the ATP phosphoribosyltransferase family. Short subfamily. Heteromultimer composed of HisG and HisZ subunits.

The protein resides in the cytoplasm. The catalysed reaction is 1-(5-phospho-beta-D-ribosyl)-ATP + diphosphate = 5-phospho-alpha-D-ribose 1-diphosphate + ATP. It participates in amino-acid biosynthesis; L-histidine biosynthesis; L-histidine from 5-phospho-alpha-D-ribose 1-diphosphate: step 1/9. Its function is as follows. Catalyzes the condensation of ATP and 5-phosphoribose 1-diphosphate to form N'-(5'-phosphoribosyl)-ATP (PR-ATP). Has a crucial role in the pathway because the rate of histidine biosynthesis seems to be controlled primarily by regulation of HisG enzymatic activity. The protein is ATP phosphoribosyltransferase of Campylobacter fetus subsp. fetus (strain 82-40).